The sequence spans 701 residues: Elongation factor G (701 aa).

A tr-type G domain is found at 8–291 (SRYRNIGIVA…AVIDFLPAPT (284 aa)). GTP-binding positions include 17 to 24 (AHVDAGKT), 89 to 93 (DTPGH), and 143 to 146 (NKMD).

This sequence belongs to the TRAFAC class translation factor GTPase superfamily. Classic translation factor GTPase family. EF-G/EF-2 subfamily.

It is found in the cytoplasm. In terms of biological role, catalyzes the GTP-dependent ribosomal translocation step during translation elongation. During this step, the ribosome changes from the pre-translocational (PRE) to the post-translocational (POST) state as the newly formed A-site-bound peptidyl-tRNA and P-site-bound deacylated tRNA move to the P and E sites, respectively. Catalyzes the coordinated movement of the two tRNA molecules, the mRNA and conformational changes in the ribosome. This Pseudomonas fluorescens (strain Pf0-1) protein is Elongation factor G.